The sequence spans 133 residues: Agglutinin alpha chain (133 aa).

Residues 1–133 (GVTFDDGAYT…LDYFSIYLSL (133 aa)) form the Jacalin-type lectin domain.

The protein belongs to the jacalin lectin family. As to quaternary structure, formed of four alpha chains and four beta chains.

Functionally, D-galactose-specific lectin, binds the T-antigen structure Gal-beta1,3-GalNAc. The chain is Agglutinin alpha chain from Maclura pomifera (Osage orange).